Reading from the N-terminus, the 297-residue chain is Ribosomal RNA small subunit methyltransferase H (297 aa).

S-adenosyl-L-methionine contacts are provided by residues Ala34–His36, Asp54, Phe88, Asp106, and Gln113. The disordered stretch occupies residues Pro272–Lys297.

It belongs to the methyltransferase superfamily. RsmH family.

It localises to the cytoplasm. The catalysed reaction is cytidine(1402) in 16S rRNA + S-adenosyl-L-methionine = N(4)-methylcytidine(1402) in 16S rRNA + S-adenosyl-L-homocysteine + H(+). In terms of biological role, specifically methylates the N4 position of cytidine in position 1402 (C1402) of 16S rRNA. This is Ribosomal RNA small subunit methyltransferase H from Acidobacterium capsulatum (strain ATCC 51196 / DSM 11244 / BCRC 80197 / JCM 7670 / NBRC 15755 / NCIMB 13165 / 161).